A 696-amino-acid polypeptide reads, in one-letter code: Polyribonucleotide nucleotidyltransferase (696 aa).

2 residues coordinate Mg(2+): Asp-486 and Asp-492. The KH domain maps to 553–612 (PRIIVRNIPKDRIGELIGPGGKNVRGISELTGAELYIEDDGRVTISGSNQESAEKAAKMV). The S1 motif domain occupies 622 to 690 (GKIYEGKVKR…KTGKIDLSRK (69 aa)).

Belongs to the polyribonucleotide nucleotidyltransferase family. It depends on Mg(2+) as a cofactor.

It is found in the cytoplasm. It carries out the reaction RNA(n+1) + phosphate = RNA(n) + a ribonucleoside 5'-diphosphate. Involved in mRNA degradation. Catalyzes the phosphorolysis of single-stranded polyribonucleotides processively in the 3'- to 5'-direction. This Leptospira borgpetersenii serovar Hardjo-bovis (strain L550) protein is Polyribonucleotide nucleotidyltransferase.